We begin with the raw amino-acid sequence, 331 residues long: Phenol 2-monooxygenase, oxygenase component DmpL (331 aa).

The protein belongs to the TmoE/XamoE family. The multicomponent enzyme phenol hydroxylase is formed by DmpL (P1 component), DmpM (P2 component), DmpN (P3 component), DmpO (P4 component) and DmpP (P5 component). The oxygenase component is a dimer composed of three subunits, DmpL, DmpN and DmpO (DmpLNO). DmpL interacts with the auxiliary protein DmpK (P0 component).

The catalysed reaction is phenol + NADH + O2 + H(+) = catechol + NAD(+) + H2O. Its pathway is aromatic compound metabolism; phenol degradation. Requires DmpM for efficient turnover. The activity of DmpLNO oxygenase is inhibited by dithiothreitol (DTT) by a mechanism apparently involving H(2)O(2) generation. Its function is as follows. Part of a multicomponent enzyme which catalyzes the degradation of phenol and some of its methylated derivatives. DmpL, DmpN and DmpO form the oxygenase component of the complex. Required for growth on phenol and for in vitro phenol hydroxylase activity. This is Phenol 2-monooxygenase, oxygenase component DmpL from Pseudomonas sp. (strain CF600).